We begin with the raw amino-acid sequence, 396 residues long: UDP-galactose translocator (396 aa).

Helical transmembrane passes span 3 to 23, 37 to 57, 65 to 85, 97 to 117, 140 to 160, 169 to 189, 200 to 220, 238 to 258, 269 to 289, and 315 to 335; these read AVGA…AGAL, YISL…IRYA, FFAT…CLLL, LVLF…KLAV, TFQV…VLML, WASL…QAGG, GAGL…GVYF, LGLF…GTAV, PAVW…AVVV, and LFGF…IGAV. The tract at residues 358–379 is disordered; the sequence is PCVHQQPPGQPPPPQLSSHRGD. An ER retention motif motif is present at residues 392–396; that stretch reads KVKGS.

It belongs to the nucleotide-sugar transporter family. SLC35A subfamily. As to quaternary structure, interacts with SLC35A3; the interaction is reduced in the presence of SLC35A4. Found in a complex with SLC35A3 and SLC35A4. In terms of assembly, interacts with B4GALT4.

The protein resides in the endoplasmic reticulum membrane. It is found in the golgi apparatus membrane. It carries out the reaction UMP(out) + UDP-alpha-D-galactose(in) = UMP(in) + UDP-alpha-D-galactose(out). The enzyme catalyses UDP-N-acetyl-alpha-D-galactosamine(in) + UMP(out) = UDP-N-acetyl-alpha-D-galactosamine(out) + UMP(in). It catalyses the reaction UMP(out) + UDP-alpha-D-glucose(in) = UMP(in) + UDP-alpha-D-glucose(out). The catalysed reaction is UMP(out) + UDP-N-acetyl-alpha-D-glucosamine(in) = UMP(in) + UDP-N-acetyl-alpha-D-glucosamine(out). It carries out the reaction UDP-alpha-D-galactose(in) + AMP(out) = UDP-alpha-D-galactose(out) + AMP(in). The enzyme catalyses UDP-alpha-D-galactose(in) + CMP(out) = UDP-alpha-D-galactose(out) + CMP(in). It catalyses the reaction UDP-N-acetyl-alpha-D-galactosamine(out) + UDP-alpha-D-galactose(in) = UDP-N-acetyl-alpha-D-galactosamine(in) + UDP-alpha-D-galactose(out). The catalysed reaction is UDP-N-acetyl-alpha-D-glucosamine(out) + UDP-alpha-D-galactose(in) = UDP-N-acetyl-alpha-D-glucosamine(in) + UDP-alpha-D-galactose(out). It carries out the reaction UDP-alpha-D-galactose(in) + UDP-alpha-D-glucose(out) = UDP-alpha-D-galactose(out) + UDP-alpha-D-glucose(in). The enzyme catalyses UMP(out) + CMP(in) = UMP(in) + CMP(out). It catalyses the reaction UMP(out) + AMP(in) = UMP(in) + AMP(out). Functionally, transports uridine diphosphate galactose (UDP-galactose) from the cytosol into the Golgi apparatus, functioning as an antiporter that exchanges UDP-galactose for UMP. It is also able to exchange UDP-galactose for AMP and CMP, and to transport UDP-N-acetylgalactosamine (UDP-GalNAc) and other nucleotide sugars. As a provider of UDP-galactose to galactosyltransferases present in the Golgi apparatus, it is necessary for globotriaosylceramide/globoside (Gb3Cer) synthesis from lactosylceramide. This Homo sapiens (Human) protein is UDP-galactose translocator.